The sequence spans 426 residues: MAPKRPLGIGKAAKAKKQKKESTENESVGETAASNELTVELDEEIEANDAVAQLKALWKTYFASEDKSELMLNGIIHECDRILRKTHNTKEQDEDDEKIELSGRFYAIYALALSSLAFYHTEDLKKVNDFFAEAFDRIESGRKAFPDSVDLAFAEAKIMISRIPLVEVSQLLVDSRVGKERSDVSKSLDASLAKWEEAQKQAVAQNHFHHYNAENFDFLQALDDLLDMVDNFGQEIMEGEDSDAEEDEKPHVELDEGHPLFAIKSSDKYNLWWREQTIAFLDHLNKNIENASAKELPALAVLKRELCKRLGQSYLMEAEVPANVFTTLSYYSKDAKSLNGLTRVEAQKISQDLFKRALTYLKQAQDEQEPETWVNVAEAMISLGNTYEIDSKEQEETYKEAEAILVKANNATNGKYEDILENLMQG.

The tract at residues Met-1 to Asn-35 is disordered. A compositionally biased stretch (polar residues) spans Asn-25–Asn-35.

Belongs to the ETT1 family.

Its subcellular location is the nucleus. Functionally, required for correct translation termination and probably involved in regulation of hypoxic gene expression. This is Enhancer of translation termination 1 (ETT1) from Clavispora lusitaniae (strain ATCC 42720) (Yeast).